Consider the following 161-residue polypeptide: Blue copper protein 1a (161 aa).

Residues Met1 to Ala23 form the signal peptide. The 101-residue stretch at Thr24 to Ala124 folds into the Phytocyanin domain. His64 lines the Cu cation pocket. Asn70 is a glycosylation site (N-linked (GlcNAc...) asparagine). Cys77 and Cys111 are disulfide-bonded. Cys105, His110, and Met116 together coordinate Cu cation. A helical transmembrane segment spans residues Val141–Ala161.

It localises to the membrane. In Medicago truncatula (Barrel medic), this protein is Blue copper protein 1a.